Here is a 180-residue protein sequence, read N- to C-terminus: D(1A) dopamine receptor (180 aa).

Residues 1–10 traverse the membrane as a helical segment; it reads NTLLVCAAVI. Over 11–21 the chain is Cytoplasmic; sequence RFRHLRSKVTN. The helical transmembrane segment at 22–48 threads the bilayer; it reads FFVISLAVSDLLVAVLVMPWKAVAEIA. Residues 49 to 57 lie on the Extracellular side of the membrane; the sequence is GFWPFGSFC. A disulfide bond links Cys57 and Cys147. The chain crosses the membrane as a helical span at residues 58-80; the sequence is NIWVAFDIMCSTASILNLCVISV. Topologically, residues 81–99 are cytoplasmic; sequence DRYWAISSPFRYERKMTPK. A helical transmembrane segment spans residues 100 to 124; that stretch reads AAFILIGVAWTLSVLISFIPVQLSW. At 125–153 the chain is on the extracellular side; it reads HKAKPTSPPDGNATSLDETVDNCDSSLSR. Residue Asn136 is glycosylated (N-linked (GlcNAc...) asparagine). A helical transmembrane segment spans residues 154 to 179; that stretch reads TYSISSSLVNFYNPVAIMXVTYTRIH. Residue Arg180 is a topological domain, cytoplasmic.

It belongs to the G-protein coupled receptor 1 family. In terms of assembly, interacts with DNAJC14 via its C-terminus. Interacts with DRD2. Interacts with DORIP1.

Its subcellular location is the cell membrane. It is found in the endoplasmic reticulum membrane. The protein resides in the cell projection. The protein localises to the cilium membrane. Dopamine receptor whose activity is mediated by G proteins which activate adenylyl cyclase. This chain is D(1A) dopamine receptor (DRD1), found in Oryctolagus cuniculus (Rabbit).